The chain runs to 500 residues: Lycopene beta cyclase, chloroplastic (500 aa).

Residues 1 to 81 (MDTLLKTPNN…ELPMYDPSKG (81 aa)) constitute a chloroplast transit peptide. NAD(+) is bound at residue 86-114 (LAVVGGGPAGLAVAQQVSEAGLSVCSIDP).

Belongs to the lycopene cyclase family.

It localises to the plastid. It is found in the chloroplast. It catalyses the reaction a carotenoid psi-end group = a carotenoid beta-end derivative. The protein operates within carotenoid biosynthesis; beta-carotene biosynthesis. It functions in the pathway carotenoid biosynthesis; beta-zeacarotene biosynthesis. Catalyzes the double cyclization reaction which converts lycopene to beta-carotene and neurosporene to beta-zeacarotene. The sequence is that of Lycopene beta cyclase, chloroplastic (LCY1) from Solanum lycopersicum (Tomato).